The primary structure comprises 89 residues: MAAQIPESDQIKQFKEFLGTYNKLTETCFLDCVKDFTTREVKPEEVTCSEHCLQKYLKMTQRISMRFQEYHIQQNEALAAKAGLLGQPR.

Ala2 bears the N-acetylalanine mark. Positions 28–52 (CFLDCVKDFTTREVKPEEVTCSEHC) match the Twin CX3C motif motif. Cystine bridges form between Cys28/Cys52 and Cys32/Cys48.

The protein belongs to the small Tim family. As to quaternary structure, heterohexamer; composed of 3 copies of TIMM9 and 3 copies of TIMM10/TIM10A, named soluble 70 kDa complex. The complex forms a 6-bladed alpha-propeller structure and associates with the TIMM22 component of the TIM22 complex. Interacts with multi-pass transmembrane proteins in transit. Also forms a complex composed of TIMM9, TIMM10/TIM10A and FXC1/TIM10B.

The protein resides in the mitochondrion inner membrane. Functionally, mitochondrial intermembrane chaperone that participates in the import and insertion of multi-pass transmembrane proteins into the mitochondrial inner membrane. May also be required for the transfer of beta-barrel precursors from the TOM complex to the sorting and assembly machinery (SAM complex) of the outer membrane. Acts as a chaperone-like protein that protects the hydrophobic precursors from aggregation and guide them through the mitochondrial intermembrane space. This chain is Mitochondrial import inner membrane translocase subunit Tim9 (Timm9), found in Rattus norvegicus (Rat).